A 446-amino-acid polypeptide reads, in one-letter code: 23S rRNA (uracil(1939)-C(5))-methyltransferase RlmD (446 aa).

Residues 6 to 64 form the TRAM domain; the sequence is KKLPQESITCEIESLSHEGRGVSHKDGKTLFVEGALPGETVTARYVNSRRSYDELAVEE. Residues cysteine 77, cysteine 83, cysteine 86, and cysteine 165 each coordinate [4Fe-4S] cluster. S-adenosyl-L-methionine-binding residues include glutamine 275, phenylalanine 304, asparagine 309, glutamate 325, aspartate 352, and aspartate 377. Cysteine 403 acts as the Nucleophile in catalysis.

It belongs to the class I-like SAM-binding methyltransferase superfamily. RNA M5U methyltransferase family. RlmD subfamily.

It carries out the reaction uridine(1939) in 23S rRNA + S-adenosyl-L-methionine = 5-methyluridine(1939) in 23S rRNA + S-adenosyl-L-homocysteine + H(+). Functionally, catalyzes the formation of 5-methyl-uridine at position 1939 (m5U1939) in 23S rRNA. This Hahella chejuensis (strain KCTC 2396) protein is 23S rRNA (uracil(1939)-C(5))-methyltransferase RlmD.